Here is a 430-residue protein sequence, read N- to C-terminus: DNA repair protein recA homolog 3, mitochondrial (430 aa).

The N-terminal 35 residues, 1–35 (MARILRNVYSLRSSLFSSELLRRSVVGTSFQLRGF), are a transit peptide targeting the mitochondrion. 119-126 (GPEASGKT) serves as a coordination point for ATP. A disordered region spans residues 385 to 415 (DEAADKETESESEEEDSLRVVVSPDNTDDES).

The protein belongs to the RecA family.

The protein localises to the mitochondrion. In terms of biological role, involved in recombination ability and DNA strand transfer activity. This is DNA repair protein recA homolog 3, mitochondrial from Arabidopsis thaliana (Mouse-ear cress).